Consider the following 343-residue polypeptide: ATPase GET3 (343 aa).

32–39 is an ATP binding site; sequence KGGVGKTT. Asp61 is a catalytic residue. Residues Glu245 and Asn272 each coordinate ATP. Cys283 and Cys286 together coordinate Zn(2+).

This sequence belongs to the arsA ATPase family. In terms of assembly, homodimer.

Its subcellular location is the cytoplasm. It localises to the endoplasmic reticulum. Its function is as follows. ATPase required for the post-translational delivery of tail-anchored (TA) proteins to the endoplasmic reticulum. Recognizes and selectively binds the transmembrane domain of TA proteins in the cytosol. This complex then targets to the endoplasmic reticulum by membrane-bound receptors, where the tail-anchored protein is released for insertion. This process is regulated by ATP binding and hydrolysis. ATP binding drives the homodimer towards the closed dimer state, facilitating recognition of newly synthesized TA membrane proteins. ATP hydrolysis is required for insertion. Subsequently, the homodimer reverts towards the open dimer state, lowering its affinity for the membrane-bound receptor, and returning it to the cytosol to initiate a new round of targeting. The protein is ATPase GET3 of Pyricularia oryzae (strain 70-15 / ATCC MYA-4617 / FGSC 8958) (Rice blast fungus).